A 412-amino-acid polypeptide reads, in one-letter code: Protein arginine N-methyltransferase 2 (412 aa).

Residues 190–412 form the RMT2 domain; that stretch reads TAADPDTYLN…YYYHPKISFA (223 aa). Residues Tyr-197, Met-227, 250 to 255, 271 to 273, 298 to 299, and Asp-319 each bind S-adenosyl-L-methionine; these read FGMGII, EAH, and WQ.

Belongs to the class I-like SAM-binding methyltransferase superfamily. RMT2 methyltransferase family. As to quaternary structure, monomer.

It localises to the cytoplasm. It is found in the nucleus. S-adenosyl-L-methionine-dependent protein-arginine N-methyltransferase that methylates the delta-nitrogen atom of arginine residues to form N5-methylarginine (type IV) in target proteins. Monomethylates ribosomal protein L12. In Candida glabrata (strain ATCC 2001 / BCRC 20586 / JCM 3761 / NBRC 0622 / NRRL Y-65 / CBS 138) (Yeast), this protein is Protein arginine N-methyltransferase 2.